A 265-amino-acid chain; its full sequence is Zearalenone hydrolase (265 aa).

Zearalenone contacts are provided by glycine 35, serine 105, and serine 106. The active site involves serine 105. Residue glutamate 129 is part of the active site. Zearalenone-binding residues include tryptophan 185, tyrosine 189, and histidine 243. Residue histidine 243 is part of the active site.

Belongs to the AB hydrolase superfamily. Hydrolase RutD family. As to quaternary structure, homodimer.

It carries out the reaction zearalenone + H2O = hydrolyzed zearalenone + H(+). Its function is as follows. Lactonohydrolase that specifically hydrolyzes zearalenone (ZEN), an oestrogenic mycotoxin produced by numerous Fusarium specie, into a non-toxic alkylresorcinol product. This is Zearalenone hydrolase from Cladophialophora bantiana (strain ATCC 10958 / CDC1940 / 8579 / CBS 173.52) (Xylohypha bantiana).